Here is a 131-residue protein sequence, read N- to C-terminus: MHLYLCVLVCLSIGMANCLLPGGIRRMTDEEIQNDEILLTGVEFAVDKYNSDTNSRLIATNVISATVQVVAGFKYNALIELRPRLCVQDPKTKIATCPLRMNLPTKCSFTFLYQSWVPQKYSMLSTKCLRA.

Positions 1-18 (MHLYLCVLVCLSIGMANC) are cleaved as a signal peptide. One can recognise a Cystatin domain in the interval 35–109 (DEILLTGVEF…RMNLPTKCSF (75 aa)). Residues 68-72 (QVVAG) carry the Secondary area of contact motif. 2 cysteine pairs are disulfide-bonded: Cys-86-Cys-97 and Cys-107-Cys-128.

The protein belongs to the cystatin family.

The protein localises to the secreted. The protein resides in the nematocyst. In terms of biological role, this recombinant protein inhibits the C1 cysteine protease papain (Ki is below 0.5 nM). This chain is Cystatin J, found in Cyanea capillata (Lion's mane jellyfish).